Consider the following 113-residue polypeptide: Cytochrome c2 (113 aa).

Residues cysteine 15, cysteine 18, histidine 19, and methionine 92 each coordinate heme c.

It belongs to the cytochrome c family. Post-translationally, binds 1 heme c group covalently per subunit.

Its function is as follows. Cytochrome c2 is found mainly in purple, non-sulfur, photosynthetic bacteria where it functions as the electron donor to the oxidized bacteriochlorophyll in the photophosphorylation pathway. However, it may also have a role in the respiratory chain and is found in some non-photosynthetic bacteria. The chain is Cytochrome c2 from Pararhodospirillum photometricum (Rhodospirillum photometricum).